Consider the following 473-residue polypeptide: Zinc finger and SCAN domain-containing protein 21 (473 aa).

K27 is covalently cross-linked (Glycyl lysine isopeptide (Lys-Gly) (interchain with G-Cter in SUMO2)). An SCAN box domain is found at R45–L127. Residues L127 to N171 form a disordered region. Positions I148 to N171 are enriched in polar residues. Glycyl lysine isopeptide (Lys-Gly) (interchain with G-Cter in SUMO2) cross-links involve residues K221 and K232. Residues L244–P272 are disordered. Basic and acidic residues predominate over residues G258–P272. 7 consecutive C2H2-type zinc fingers follow at residues Y277–H299, Y305–H327, Y333–H354, Y360–H382, Y388–H410, Y416–H438, and Y444–H466. K349 participates in a covalent cross-link: Glycyl lysine isopeptide (Lys-Gly) (interchain with G-Cter in SUMO2).

Belongs to the krueppel C2H2-type zinc-finger protein family.

Its subcellular location is the nucleus. Strong transcriptional activator. Plays an important role in spermatogenesis; essential for the progression of meiotic prophase I in spermatocytes. The sequence is that of Zinc finger and SCAN domain-containing protein 21 (ZSCAN21) from Gorilla gorilla gorilla (Western lowland gorilla).